We begin with the raw amino-acid sequence, 362 residues long: Sulfate/thiosulfate import ATP-binding protein CysA (362 aa).

The region spanning 13-243 (ITVRDAYKRY…PTNAFVMSFL (231 aa)) is the ABC transporter domain. 45–52 (GPSGSGKS) lines the ATP pocket.

It belongs to the ABC transporter superfamily. Sulfate/tungstate importer (TC 3.A.1.6) family. As to quaternary structure, the complex is composed of two ATP-binding proteins (CysA), two transmembrane proteins (CysT and CysW) and a solute-binding protein (CysP).

It localises to the cell membrane. The catalysed reaction is sulfate(out) + ATP + H2O = sulfate(in) + ADP + phosphate + H(+). It carries out the reaction thiosulfate(out) + ATP + H2O = thiosulfate(in) + ADP + phosphate + H(+). Part of the ABC transporter complex CysAWTP involved in sulfate/thiosulfate import. Responsible for energy coupling to the transport system. The protein is Sulfate/thiosulfate import ATP-binding protein CysA of Mycolicibacterium paratuberculosis (strain ATCC BAA-968 / K-10) (Mycobacterium paratuberculosis).